A 380-amino-acid chain; its full sequence is Cytochrome b (380 aa).

Transmembrane regions (helical) follow at residues 34-54 (FGSLLGLFLTMQIITGIILAM), 78-100 (WLMRTMHMNGAAFMFICMYAHMG), 113-133 (TWNIGIIIMIATMATAFMGYV), and 179-199 (FFAFHFVLPFVLIALSGVHLL). Heme b is bound by residues H84 and H98. The heme b site is built by H183 and H197. H202 is an a ubiquinone binding site. Transmembrane regions (helical) follow at residues 225-245 (FSWKDLLGFAXMILIFCTITL), 289-309 (LGGVVALVGSLIIPATMMLTH), 324-344 (VIFWLFCANFIALSWIGAAPV), and 349-369 (ITLGQVFSMLYFLFFLTAPMI).

This sequence belongs to the cytochrome b family. In terms of assembly, the main subunits of complex b-c1 are: cytochrome b, cytochrome c1 and the Rieske protein. Heme b serves as cofactor.

The protein resides in the mitochondrion inner membrane. Functionally, component of the ubiquinol-cytochrome c reductase complex (complex III or cytochrome b-c1 complex) that is part of the mitochondrial respiratory chain. The b-c1 complex mediates electron transfer from ubiquinol to cytochrome c. Contributes to the generation of a proton gradient across the mitochondrial membrane that is then used for ATP synthesis. The chain is Cytochrome b (mt:Cyt-b) from Xenoturbella bocki (Marine worm).